A 237-amino-acid chain; its full sequence is Methylthioribulose-1-phosphate dehydratase (237 aa).

Residue C97 participates in substrate binding. Zn(2+)-binding residues include H114 and H116. The active-site Proton donor/acceptor is E143. H199 is a binding site for Zn(2+).

It belongs to the aldolase class II family. MtnB subfamily. Requires Zn(2+) as cofactor.

The protein localises to the cytoplasm. It catalyses the reaction 5-(methylsulfanyl)-D-ribulose 1-phosphate = 5-methylsulfanyl-2,3-dioxopentyl phosphate + H2O. It functions in the pathway amino-acid biosynthesis; L-methionine biosynthesis via salvage pathway; L-methionine from S-methyl-5-thio-alpha-D-ribose 1-phosphate: step 2/6. Functionally, catalyzes the dehydration of methylthioribulose-1-phosphate (MTRu-1-P) into 2,3-diketo-5-methylthiopentyl-1-phosphate (DK-MTP-1-P). The polypeptide is Methylthioribulose-1-phosphate dehydratase (Coccidioides posadasii (strain C735) (Valley fever fungus)).